Consider the following 30-residue polypeptide: Fimbrial assembly protein, serogroup B1 (30 aa).

The protein is Fimbrial assembly protein, serogroup B1 (fimB) of Dichelobacter nodosus (Bacteroides nodosus).